A 199-amino-acid chain; its full sequence is Pneumococcal vaccine antigen A homolog (199 aa).

Its subcellular location is the cell surface. This is Pneumococcal vaccine antigen A homolog (pvaA) from Streptococcus pyogenes serotype M1.